We begin with the raw amino-acid sequence, 340 residues long: Ribonucleoside-diphosphate reductase subunit beta (340 aa).

D88 and H122 together coordinate Fe cation. The active site involves Y126. H216 is a Fe cation binding site.

It belongs to the ribonucleoside diphosphate reductase small chain family. Tetramer of two alpha and two beta subunits. It depends on Fe cation as a cofactor.

The catalysed reaction is a 2'-deoxyribonucleoside 5'-diphosphate + [thioredoxin]-disulfide + H2O = a ribonucleoside 5'-diphosphate + [thioredoxin]-dithiol. Its function is as follows. Provides the precursors necessary for DNA synthesis. Catalyzes the biosynthesis of deoxyribonucleotides from the corresponding ribonucleotides. This chain is Ribonucleoside-diphosphate reductase subunit beta (nrdF), found in Mycoplasma genitalium (strain ATCC 33530 / DSM 19775 / NCTC 10195 / G37) (Mycoplasmoides genitalium).